The following is a 139-amino-acid chain: 3-hydroxyacyl-[acyl-carrier-protein] dehydratase FabZ (139 aa).

Histidine 46 is a catalytic residue.

Belongs to the thioester dehydratase family. FabZ subfamily.

The protein resides in the cytoplasm. It carries out the reaction a (3R)-hydroxyacyl-[ACP] = a (2E)-enoyl-[ACP] + H2O. Involved in unsaturated fatty acids biosynthesis. Catalyzes the dehydration of short chain beta-hydroxyacyl-ACPs and long chain saturated and unsaturated beta-hydroxyacyl-ACPs. In Streptococcus pyogenes serotype M1, this protein is 3-hydroxyacyl-[acyl-carrier-protein] dehydratase FabZ.